Here is a 356-residue protein sequence, read N- to C-terminus: MIFNKLEEVEDRFREVEGLLSDPQVVSQQKRFLELTREHAELSSVVAVYREYKRVSEDIEGNRELLQDSDPEMREMAKAELPELEAHREELAQQLKVLLLPKDPNDDKNVILEIRAGTGGDEAALFAGDLFRMYSRFAEGQGWKVETMSVSDSEAGGFKEIIAMISGNRVYSQLKYESGTHRVQRVPETEAQGRIHTSACTVAVLPEAEDVDVDIDPTDLRIDVYRASGAGGQHVNKTESAVRITHVPTGVVVSCQDEKSQHKNKAKAMKVLKSRILDQVMADQQAQMAADRKSQVGSGDRSQRIRTYNFPQGRCTDHRIGLTLYRLEGIMQGNLSELVEPLTLHYQSEAMAAQEA.

At Q233 the chain carries N5-methylglutamine.

This sequence belongs to the prokaryotic/mitochondrial release factor family. Methylated by PrmC. Methylation increases the termination efficiency of RF1.

Its subcellular location is the cytoplasm. Its function is as follows. Peptide chain release factor 1 directs the termination of translation in response to the peptide chain termination codons UAG and UAA. This is Peptide chain release factor 1 from Syntrophotalea carbinolica (strain DSM 2380 / NBRC 103641 / GraBd1) (Pelobacter carbinolicus).